The primary structure comprises 175 residues: ATP synthase subunit b (175 aa).

A helical membrane pass occupies residues 20-40; sequence LIFWTAITFVIVLLILKKIAW.

Belongs to the ATPase B chain family. In terms of assembly, F-type ATPases have 2 components, F(1) - the catalytic core - and F(0) - the membrane proton channel. F(1) has five subunits: alpha(3), beta(3), gamma(1), delta(1), epsilon(1). F(0) has four main subunits: a(1), b(2) and c(10-14). The alpha and beta chains form an alternating ring which encloses part of the gamma chain. F(1) is attached to F(0) by a central stalk formed by the gamma and epsilon chains, while a peripheral stalk is formed by the delta and b chains.

Its subcellular location is the cell inner membrane. Its function is as follows. F(1)F(0) ATP synthase produces ATP from ADP in the presence of a proton or sodium gradient. F-type ATPases consist of two structural domains, F(1) containing the extramembraneous catalytic core and F(0) containing the membrane proton channel, linked together by a central stalk and a peripheral stalk. During catalysis, ATP synthesis in the catalytic domain of F(1) is coupled via a rotary mechanism of the central stalk subunits to proton translocation. Functionally, component of the F(0) channel, it forms part of the peripheral stalk, linking F(1) to F(0). The chain is ATP synthase subunit b from Pelodictyon phaeoclathratiforme (strain DSM 5477 / BU-1).